The sequence spans 3677 residues: Dystrophin (3677 aa).

Residues 1–240 form an actin-binding region; that stretch reads MLWWEEVEDC…YITSLFQVLP (240 aa). 2 consecutive Calponin-homology (CH) domains span residues 15 to 119 and 134 to 240; these read DVQK…LHWQ and TNSE…QVLP. The interval 63 to 72 is ANK2- and ANK-3 binding; that stretch reads PKEKGSTRVH. Spectrin repeat units lie at residues 342–447, 451–557, 560–668, 728–828, 831–935, 944–1046, 1049–1154, 1163–1264, 1268–1464, 1469–1569, 1573–1676, 1680–1777, 1779–1875, 1878–1980, 2001–2098, 2106–2209, 2215–2316, 2317–2415, 2465–2569, 2576–2678, 2682–2786, 2800–2922, and 2927–3032; these read LDSY…SNLH, MDLQ…LLQD, LKWQ…QISQ, DITE…NWLE, NNII…ELQT, RYQE…KLEE, NKLR…EALK, LQKD…TLEE, CWHE…LFQK, EQRL…QLEK, LSRK…NLLL, KHME…TGKA, IPLK…KALE, HQWY…TLHE, YLTE…ERQG, KWRH…RVEE, SEFQ…GELE, VHIK…LRTK, ADFN…QLNE, QWLE…ALEE, LLQQ…KKSL, KRLH…RKID, and RLQE…QLHE. Positions 1416 to 1914 are interaction with SYNM; it reads SDLTSHEISL…PEPRDERKIK (499 aa). The WW domain occupies 3047–3080; sequence TSVQGPWERAISPNKVPYYINHETQTTCWDHPKM. Residues 3050-3400 form an interaction with SYNM region; that stretch reads QGPWERAISP…TVLEGDNMET (351 aa). The segment at 3300 to 3356 adopts a ZZ-type; degenerate zinc-finger fold; it reads KHQAKCNICKECPIIGFRYRSLKHFNYDICQSCFFSGRVAKGHKMHYPMVEYCTPTT. Residues C3305, C3308, C3329, and C3332 each coordinate Zn(2+). Positions 3458-3510 are binds to SNTB1; that stretch reads DDEHLLIQHYCQSLNQDSPLSQPRSPAQILISLESEERGELERILADLEEENR. Phosphoserine occurs at positions 3475, 3482, and 3492. Disordered stretches follow at residues 3520 to 3546 and 3595 to 3677; these read KQQH…QSPR and EAKV…EDTM. Polar residues-rich tracts occupy residues 3599–3618 and 3654–3664; these read NGTT…SSQP and QLNNSFPSSRG. S3604, S3605, S3609, S3615, S3616, and S3658 each carry phosphoserine.

Interacts with SYNM. Interacts with the syntrophins SNTG1 and SNTG2. Interacts with KRT19. Component of the dystrophin-associated glycoprotein complex which is composed of three subcomplexes: a cytoplasmic complex comprised of DMD (or UTRN), DTNA and a number of syntrophins, such as SNTB1, SNTB2, SNTG1 and SNTG2, the transmembrane dystroglycan complex, and the sarcoglycan-sarcospan complex. Interacts with DAG1 (betaDAG1) with DMD; the interaction is inhibited by phosphorylation on the PPXY motif of DAG1. Interacts with SYNM; SNTA1 and SNTB1. Interacts with CMYA5. Directly interacts with ANK2 and ANK3; these interactions do not interfere with betaDAG1-binding and are necessary for proper localization in muscle cells. Identified in a dystroglycan complex that contains at least PRX, DRP2, UTRN, DMD and DAG1. Interacts with DTNB. Interacts with PGM5; the interaction is direct. Interacts with NOS1; localizes NOS1 to sarcolemma in muscle cells. Strongly expressed in skeletal muscle and weak expression observed in newborn brain which increases in adult brain.

It localises to the cell membrane. Its subcellular location is the sarcolemma. The protein localises to the cytoplasm. It is found in the cytoskeleton. The protein resides in the postsynaptic cell membrane. Its function is as follows. Anchors the extracellular matrix to the cytoskeleton via F-actin. Ligand for dystroglycan. Component of the dystrophin-associated glycoprotein complex which accumulates at the neuromuscular junction (NMJ) and at a variety of synapses in the peripheral and central nervous systems and has a structural function in stabilizing the sarcolemma. Also implicated in signaling events and synaptic transmission. The protein is Dystrophin (Dmd) of Rattus norvegicus (Rat).